Consider the following 206-residue polypeptide: Transmembrane 4 L6 family member 19 (206 aa).

Residues 1 to 16 (MLSFSRVVNCSRTCSR) lie on the Cytoplasmic side of the membrane. A helical membrane pass occupies residues 17 to 37 (FLGLSLGTASLCAAGANIALL). At 38 to 54 (FPNWDVTYLMRGLIGKH) the chain is on the extracellular side. Residues 55-75 (AMLGSGLWGGGLMVLLAATLI) form a helical membrane-spanning segment. Residues 76–89 (SMTGSFSKSAPCLQ) lie on the Cytoplasmic side of the membrane. A helical transmembrane segment spans residues 90–110 (VLIALLSSGLALLGAVICFVT). Residues 111–171 (SGVALKDGPF…PSKAVVWHVA (61 aa)) are Extracellular-facing. N-linked (GlcNAc...) asparagine glycosylation is present at N129. The helical transmembrane segment at 172–192 (FFSILLCISLLQLLLVAIHLV) threads the bilayer. Residues 182–192 (LQLLLVAIHLV) are important for homodimerization. The Cytoplasmic portion of the chain corresponds to 193–206 (NSILGLFCSFCEKH).

This sequence belongs to the L6 tetraspanin family. As to quaternary structure, may form homodimers and homooligomers. Interacts with integrins ITGAV and ITGB3. Interacts with components of members of the V0 complex of vacuolar(H+)-ATPase (V-ATPase), including ATP6V0B and ATP6V0D2; this interaction inhibits V1-V0 complex assembly. In terms of tissue distribution, predominantly expressed in osteoclasts (at protein level). Also expressed in white adipose tissue, as well as in bone marrow-derived macrophages.

It localises to the lysosome membrane. It is found in the cytoplasm. The protein localises to the cytoskeleton. Its subcellular location is the cell projection. The protein resides in the filopodium. In terms of biological role, negatively regulates vacuolar (H+)-ATPase (V-ATPase) activity by interacting with members of V-ATPase V0 complex and hence inhibiting V1-V0 assembly. Required for multinucleation during osteoclast differentiation. The protein is Transmembrane 4 L6 family member 19 (Tm4sf19) of Mus musculus (Mouse).